Reading from the N-terminus, the 785-residue chain is Gamma-interferon-inducible protein 16 (785 aa).

Residues 5 to 92 enclose the Pyrin domain; it reads YKNIVLLKGL…KKEKLKAKGL (88 aa). An N6-acetyllysine modification is found at Lys45. The span at 88–99 shows a compositional bias: basic residues; that stretch reads KAKGLAPSRKRK. A disordered region spans residues 88 to 196; sequence KAKGLAPSRK…TVAKCQATPR (109 aa). Residue Ser95 is modified to Phosphoserine. The Nuclear localization signal signature appears at 96 to 100; that stretch reads RKRKK. Position 99 is an N6-acetyllysine (Lys99). Residues 104 to 114 are compositionally biased toward low complexity; sequence AASPAPSTSST. Ser106 carries the phosphoserine modification. Residue Lys116 forms a Glycyl lysine isopeptide (Lys-Gly) (interchain with G-Cter in SUMO2) linkage. N6-acetyllysine; alternate is present on Lys128. Lys128 is covalently cross-linked (Glycyl lysine isopeptide (Lys-Gly) (interchain with G-Cter in SUMO2); alternate). 3 short sequence motifs (nuclear localization signal) span residues 128-131, 134-136, and 140-143; these read KRKK, KEK, and KGSK. Residues 166-182 are compositionally biased toward low complexity; the sequence is SPSPKTSSSAPPNTSST. Phosphoserine is present on residues Ser168 and Ser174. Residues 192–393 are interaction with TP53 C-terminus; that stretch reads QATPRRSVLQ…SFIQIKKKTN (202 aa). The region spanning 193 to 393 is the HIN-200 1 domain; that stretch reads ATPRRSVLQK…SFIQIKKKTN (201 aa). At Lys214 the chain carries N6-acetyllysine. Residues 388–442 form a disordered region; sequence IKKKTNPRNNDPKSMKLPQEQSQLPNPSEAGTTFPESHLWTPQMPPTTPSSSFFT. Over residues 406–422 the composition is skewed to polar residues; that stretch reads QEQSQLPNPSEAGTTFP. N6-acetyllysine occurs at positions 444 and 451. Residues 566–765 enclose the HIN-200 2 domain; sequence EVSIEDSAQS…SHIKVIKTRK (200 aa). The interval 571 to 766 is interaction with TP53 core domain; sequence DSAQSDLKEV…HIKVIKTRKN (196 aa). Position 575 is a phosphoserine (Ser575). Lys598 and Lys614 each carry N6-acetyllysine. Residue Lys683 forms a Glycyl lysine isopeptide (Lys-Gly) (interchain with G-Cter in SUMO2) linkage. A Phosphoserine modification is found at Ser780.

Belongs to the HIN-200 family. As to quaternary structure, forms homooligomers. Interacts with TMEM173, AIM2, PYCARD and CASP1. Interacts with BRCA1, TP53, E2F1, RB1 and SP1. Interacts with MTA1. Interacts with MTA1. Interacts with PYDC5. Post-translationally, lysine acetylation in the multipartite nuclear localization signal (NLS) regulates the subcellular location. Phosphorylated on Ser and Thr.

The protein resides in the nucleus. It is found in the cytoplasm. In terms of biological role, binds double-stranded DNA. Binds preferentially to supercoiled DNA and cruciform DNA structures. Seems to be involved in transcriptional regulation. May function as a transcriptional repressor. Could have a role in the regulation of hematopoietic differentiation through activation of unknown target genes. Controls cellular proliferation by modulating the functions of cell cycle regulatory factors including p53/TP53 and the retinoblastoma protein. May be involved in TP53-mediated transcriptional activation by enhancing TP53 sequence-specific DNA binding and modulating TP53 phosphorylation status. Seems to be involved in energy-level-dependent activation of the ATM/ AMPK/TP53 pathway coupled to regulation of autophagy. May be involved in regulation of TP53-mediated cell death also involving BRCA1. May be involved in the senescence of prostate epithelial cells. Involved in innate immune response by recognizing viral dsDNA in the cytosol and probably in the nucleus. After binding to viral DNA in the cytoplasm recruits TMEM173/STING and mediates the induction of IFN-beta. Has anti-inflammatory activity and inhibits the activation of the AIM2 inflammasome, probably via association with AIM2. Proposed to bind viral DNA in the nucleus and to induce the formation of nuclear caspase-1-activating inflammasome formation via association with PYCARD. Inhibits replication of herpesviruses probably by interfering with promoter recruitment of members of the Sp1 family of transcription factors. This chain is Gamma-interferon-inducible protein 16 (IFI16), found in Pongo abelii (Sumatran orangutan).